The primary structure comprises 185 residues: dCTP deaminase (185 aa).

DCTP-binding positions include 107–112 (KSTYAR), 131–133 (TLE), Gln152, Tyr166, and Gln176. The active-site Proton donor/acceptor is the Glu133.

This sequence belongs to the dCTP deaminase family. Homotrimer.

It catalyses the reaction dCTP + H2O + H(+) = dUTP + NH4(+). Its pathway is pyrimidine metabolism; dUMP biosynthesis; dUMP from dCTP (dUTP route): step 1/2. Its function is as follows. Catalyzes the deamination of dCTP to dUTP. This Wolbachia sp. subsp. Brugia malayi (strain TRS) protein is dCTP deaminase.